A 280-amino-acid polypeptide reads, in one-letter code: UDP-3-O-acyl-N-acetylglucosamine deacetylase (280 aa).

Residues His79, His237, and Asp241 each contribute to the Zn(2+) site. The active-site Proton donor is His264.

The protein belongs to the LpxC family. It depends on Zn(2+) as a cofactor.

It catalyses the reaction a UDP-3-O-[(3R)-3-hydroxyacyl]-N-acetyl-alpha-D-glucosamine + H2O = a UDP-3-O-[(3R)-3-hydroxyacyl]-alpha-D-glucosamine + acetate. It participates in glycolipid biosynthesis; lipid IV(A) biosynthesis; lipid IV(A) from (3R)-3-hydroxytetradecanoyl-[acyl-carrier-protein] and UDP-N-acetyl-alpha-D-glucosamine: step 2/6. Catalyzes the hydrolysis of UDP-3-O-myristoyl-N-acetylglucosamine to form UDP-3-O-myristoylglucosamine and acetate, the committed step in lipid A biosynthesis. This is UDP-3-O-acyl-N-acetylglucosamine deacetylase from Chlamydia caviae (strain ATCC VR-813 / DSM 19441 / 03DC25 / GPIC) (Chlamydophila caviae).